The primary structure comprises 952 residues: Alpha-L-rhamnosidase (952 aa).

Positions 1-21 (MKYNKLLFSLLLLAVFCFSCK) are cleaved as a signal peptide. Residues aspartate 520, 524 to 525 (RE), aspartate 532, and tryptophan 594 each bind alpha-L-rhamnose. The active-site Proton donor is the glutamate 525. Glutamate 809 (proton acceptor) is an active-site residue. Position 826 (histidine 826) interacts with alpha-L-rhamnose.

Belongs to the glycosyl hydrolase 78 family.

It is found in the cell membrane. It catalyses the reaction Hydrolysis of terminal non-reducing alpha-L-rhamnose residues in alpha-L-rhamnosides.. Its function is as follows. Alpha-L-rhamnosidase that may be involved in ulvan degradation. Ulvan is the main polysaccharide component of the Ulvales (green seaweed) cell wall. It is composed of disaccharide building blocks comprising 3-sulfated rhamnose (Rha3S) linked to D-glucuronic acid (GlcA), L-iduronic acid (IduA), or D-xylose (Xyl). This is Alpha-L-rhamnosidase from Formosa agariphila (strain DSM 15362 / KCTC 12365 / LMG 23005 / KMM 3901 / M-2Alg 35-1).